A 416-amino-acid chain; its full sequence is Gamma-glutamyl phosphate reductase (416 aa).

It belongs to the gamma-glutamyl phosphate reductase family.

It is found in the cytoplasm. The enzyme catalyses L-glutamate 5-semialdehyde + phosphate + NADP(+) = L-glutamyl 5-phosphate + NADPH + H(+). It participates in amino-acid biosynthesis; L-proline biosynthesis; L-glutamate 5-semialdehyde from L-glutamate: step 2/2. In terms of biological role, catalyzes the NADPH-dependent reduction of L-glutamate 5-phosphate into L-glutamate 5-semialdehyde and phosphate. The product spontaneously undergoes cyclization to form 1-pyrroline-5-carboxylate. This Vibrio vulnificus (strain CMCP6) protein is Gamma-glutamyl phosphate reductase.